Consider the following 140-residue polypeptide: Sex-regulated protein janus-B (140 aa).

Position 42 (Arg-42) interacts with substrate. Catalysis depends on His-69, which acts as the Proton acceptor. Ser-110–Thr-112 contributes to the substrate binding site.

The protein belongs to the janus family.

In terms of biological role, janA and janB regulate somatic sex differentiation. The protein is Sex-regulated protein janus-B (janB) of Drosophila teissieri (Fruit fly).